The primary structure comprises 141 residues: Early nodulin-like protein 19 (141 aa).

Residues 1–26 (MGRSMVLISAVVLAFLVAAPIPEVTA) form the signal peptide. The region spanning 27-127 (KKYLVGDKKF…GMKLDVLVET (101 aa)) is the Phytocyanin domain. N-linked (GlcNAc...) asparagine glycosylation is found at N42 and N88. Residues C80 and C115 are joined by a disulfide bond.

It belongs to the early nodulin-like (ENODL) family.

May act as a carbohydrate transporter. The polypeptide is Early nodulin-like protein 19 (Arabidopsis thaliana (Mouse-ear cress)).